The chain runs to 297 residues: Putative S-adenosyl-L-methionine-dependent methyltransferase Mmcs_1044 (297 aa).

S-adenosyl-L-methionine-binding positions include aspartate 124 and 153–154 (DL).

The protein belongs to the UPF0677 family.

In terms of biological role, exhibits S-adenosyl-L-methionine-dependent methyltransferase activity. The polypeptide is Putative S-adenosyl-L-methionine-dependent methyltransferase Mmcs_1044 (Mycobacterium sp. (strain MCS)).